A 192-amino-acid chain; its full sequence is MVTMVPPLFFVCALFFAEGIGLDRLCIAALSPRCTLFHTCRFLFLGGILITGNWVCIHYVYDPLALRFLTPLGVGASAFCLSTCSGKLSRTCTSHRAQSEWGLLYALVFYITYTALNLFEALVMWGVSCVGFLCFSTILRAIHQRITQGNGTAVEKTAALLLASMGFIALSLYGTDELWLFPIPAAGMRTRL.

6 helical membrane-spanning segments follow: residues 5–22, 42–61, 66–88, 101–118, 122–139, and 159–181; these read VPPL…GIGL, FLFL…HYVY, LRFL…SGKL, WGLL…ALNL, LVMW…STIL, and ALLL…LWLF.

The protein resides in the cell membrane. This is an uncharacterized protein from Treponema pallidum (strain Nichols).